Reading from the N-terminus, the 156-residue chain is 6,7-dimethyl-8-ribityllumazine synthase (156 aa).

Residues phenylalanine 23, 57–59 (AFE), and 81–83 (AVI) contribute to the 5-amino-6-(D-ribitylamino)uracil site. Position 86–87 (86–87 (ST)) interacts with (2S)-2-hydroxy-3-oxobutyl phosphate. The active-site Proton donor is histidine 89. Position 114 (phenylalanine 114) interacts with 5-amino-6-(D-ribitylamino)uracil. Position 128 (arginine 128) interacts with (2S)-2-hydroxy-3-oxobutyl phosphate.

This sequence belongs to the DMRL synthase family.

It catalyses the reaction (2S)-2-hydroxy-3-oxobutyl phosphate + 5-amino-6-(D-ribitylamino)uracil = 6,7-dimethyl-8-(1-D-ribityl)lumazine + phosphate + 2 H2O + H(+). It functions in the pathway cofactor biosynthesis; riboflavin biosynthesis; riboflavin from 2-hydroxy-3-oxobutyl phosphate and 5-amino-6-(D-ribitylamino)uracil: step 1/2. Functionally, catalyzes the formation of 6,7-dimethyl-8-ribityllumazine by condensation of 5-amino-6-(D-ribitylamino)uracil with 3,4-dihydroxy-2-butanone 4-phosphate. This is the penultimate step in the biosynthesis of riboflavin. This Campylobacter lari (strain RM2100 / D67 / ATCC BAA-1060) protein is 6,7-dimethyl-8-ribityllumazine synthase.